Reading from the N-terminus, the 155-residue chain is SsrA-binding protein (155 aa).

Basic and acidic residues predominate over residues 123-142 (DLHDKRETEKKRDWEREKGQ). The segment at 123 to 155 (DLHDKRETEKKRDWEREKGQLMRHKISSPRKDT) is disordered. Residues 143-155 (LMRHKISSPRKDT) show a composition bias toward basic residues.

The protein belongs to the SmpB family.

The protein localises to the cytoplasm. Required for rescue of stalled ribosomes mediated by trans-translation. Binds to transfer-messenger RNA (tmRNA), required for stable association of tmRNA with ribosomes. tmRNA and SmpB together mimic tRNA shape, replacing the anticodon stem-loop with SmpB. tmRNA is encoded by the ssrA gene; the 2 termini fold to resemble tRNA(Ala) and it encodes a 'tag peptide', a short internal open reading frame. During trans-translation Ala-aminoacylated tmRNA acts like a tRNA, entering the A-site of stalled ribosomes, displacing the stalled mRNA. The ribosome then switches to translate the ORF on the tmRNA; the nascent peptide is terminated with the 'tag peptide' encoded by the tmRNA and targeted for degradation. The ribosome is freed to recommence translation, which seems to be the essential function of trans-translation. This chain is SsrA-binding protein, found in Methylibium petroleiphilum (strain ATCC BAA-1232 / LMG 22953 / PM1).